Here is a 233-residue protein sequence, read N- to C-terminus: Putative N-acetylmannosamine-6-phosphate 2-epimerase (233 aa).

It belongs to the NanE family.

It carries out the reaction an N-acyl-D-glucosamine 6-phosphate = an N-acyl-D-mannosamine 6-phosphate. Its pathway is amino-sugar metabolism; N-acetylneuraminate degradation; D-fructose 6-phosphate from N-acetylneuraminate: step 3/5. In terms of biological role, converts N-acetylmannosamine-6-phosphate (ManNAc-6-P) to N-acetylglucosamine-6-phosphate (GlcNAc-6-P). In Yersinia pseudotuberculosis serotype O:1b (strain IP 31758), this protein is Putative N-acetylmannosamine-6-phosphate 2-epimerase.